The sequence spans 862 residues: MEKNVTPMMRQYLDIKKKYKDAIIFFRVGNFYEMFFDDAIEASKLLNLTLTKRENVPMCGVPYHTSKEYIRKLILFDKKVAICEQAANSTSVGPLEREVVEVITPGVIVDEDFLNDDVNNYLVAISDYKNYYSFSYIDLSTSSLGIMFYENSFFEKLKRDLEKYSPKEIIVSENFYYEYSEKLNLNRFLINRVPAWHLDKDVAIKTIKEHFNILGLSSLGFDEEKPYYISIFLIINHIKNNLKNLLSNIDKIDINNDSLYMFLDDVTQVNLELVKNNNDFSSQYSLYSVLNDCKTAMGKRLLREFILNPILNIPEINTRLDHVEFFCKNISLTMTLREAFVNIWDVERIISRIQMKRYIKKDFLFIEKSLSVFFLVKKLFDKHNFDYWNFDKFEEDSISKVYFLINSAISSSSDELIKRGYDLKLDSLKDLKINANKYIDEYLESERLLSKINNLKIRKTNNRGLFFEVTKSNYAQVPPHFMESQTLNSSKRYKTEKLISLEANINNAEDSVVAFEQEIFDEIASNVVKHNKVLKKVAEFFAYIDLVVNFGYLAKKNEYKRPILTCSKEIFLEKSRHPVVEHYVKNTEIFTENFVKINKEKYFCLITGPNMAGKSTYLRQVALITLMAHIGSFVPASRAVIGITDKIFCRIGASDNLAKGESTFLVEMNETANILRNATEKSLIIMDEVGRGTSTNDGLAIAYSIIEYILEYIKARSLFATHFHELSAINHKAFINLSMKIEKQGNELVFLREVEEKPSLNSYGIYVARIAGLPLRVVDRANVILKSLGSRKDSSCLEFLPCISSDTCDREVLKNDTDVHVKLNEYLELKKFISNIDINNITPFQSIELLNQLVLKVISQSS.

An ATP-binding site is contributed by 608 to 615; it reads GPNMAGKS.

Belongs to the DNA mismatch repair MutS family.

In terms of biological role, this protein is involved in the repair of mismatches in DNA. It is possible that it carries out the mismatch recognition step. This protein has a weak ATPase activity. In Borreliella afzelii (strain PKo) (Borrelia afzelii), this protein is DNA mismatch repair protein MutS.